A 155-amino-acid polypeptide reads, in one-letter code: Small ribosomal subunit protein uS7 (155 aa).

Belongs to the universal ribosomal protein uS7 family. Part of the 30S ribosomal subunit. Contacts proteins S9 and S11.

In terms of biological role, one of the primary rRNA binding proteins, it binds directly to 16S rRNA where it nucleates assembly of the head domain of the 30S subunit. Is located at the subunit interface close to the decoding center, probably blocks exit of the E-site tRNA. This Helicobacter acinonychis (strain Sheeba) protein is Small ribosomal subunit protein uS7.